Reading from the N-terminus, the 161-residue chain is RNA pyrophosphohydrolase (161 aa).

In terms of domain architecture, Nudix hydrolase spans 6-149 (GYRPNVGIIL…KREVYRRAMR (144 aa)). The Nudix box signature appears at 38-59 (GGIKKDESPEEALFRELKEEVG).

This sequence belongs to the Nudix hydrolase family. RppH subfamily. A divalent metal cation serves as cofactor.

Accelerates the degradation of transcripts by removing pyrophosphate from the 5'-end of triphosphorylated RNA, leading to a more labile monophosphorylated state that can stimulate subsequent ribonuclease cleavage. This Hahella chejuensis (strain KCTC 2396) protein is RNA pyrophosphohydrolase.